A 360-amino-acid chain; its full sequence is 3-dehydroquinate synthase (360 aa).

NAD(+) contacts are provided by residues 104–108, 128–129, Lys141, and 168–171; these read GVIGD, TT, and FLDT. Zn(2+)-binding residues include Glu183, His243, and His260.

This sequence belongs to the sugar phosphate cyclases superfamily. Dehydroquinate synthase family. Co(2+) is required as a cofactor. The cofactor is Zn(2+). Requires NAD(+) as cofactor.

It localises to the cytoplasm. The enzyme catalyses 7-phospho-2-dehydro-3-deoxy-D-arabino-heptonate = 3-dehydroquinate + phosphate. It functions in the pathway metabolic intermediate biosynthesis; chorismate biosynthesis; chorismate from D-erythrose 4-phosphate and phosphoenolpyruvate: step 2/7. Its function is as follows. Catalyzes the conversion of 3-deoxy-D-arabino-heptulosonate 7-phosphate (DAHP) to dehydroquinate (DHQ). The sequence is that of 3-dehydroquinate synthase from Streptococcus equi subsp. equi (strain 4047).